The sequence spans 463 residues: Bifunctional protein HldE (463 aa).

A ribokinase region spans residues 1-315; sequence MRKILVIGDL…LILNQTHPKI (315 aa). 191–194 is an ATP binding site; sequence NRFE. The active site involves Asp260. Residues 334–463 form a cytidylyltransferase region; the sequence is FTNGCFDILH…IEKIKRAYND (130 aa).

In the N-terminal section; belongs to the carbohydrate kinase PfkB family. It in the C-terminal section; belongs to the cytidylyltransferase family. Homodimer.

The enzyme catalyses D-glycero-beta-D-manno-heptose 7-phosphate + ATP = D-glycero-beta-D-manno-heptose 1,7-bisphosphate + ADP + H(+). It catalyses the reaction D-glycero-beta-D-manno-heptose 1-phosphate + ATP + H(+) = ADP-D-glycero-beta-D-manno-heptose + diphosphate. It participates in nucleotide-sugar biosynthesis; ADP-L-glycero-beta-D-manno-heptose biosynthesis; ADP-L-glycero-beta-D-manno-heptose from D-glycero-beta-D-manno-heptose 7-phosphate: step 1/4. Its pathway is nucleotide-sugar biosynthesis; ADP-L-glycero-beta-D-manno-heptose biosynthesis; ADP-L-glycero-beta-D-manno-heptose from D-glycero-beta-D-manno-heptose 7-phosphate: step 3/4. Catalyzes the phosphorylation of D-glycero-D-manno-heptose 7-phosphate at the C-1 position to selectively form D-glycero-beta-D-manno-heptose-1,7-bisphosphate. Its function is as follows. Catalyzes the ADP transfer from ATP to D-glycero-beta-D-manno-heptose 1-phosphate, yielding ADP-D-glycero-beta-D-manno-heptose. In Helicobacter acinonychis (strain Sheeba), this protein is Bifunctional protein HldE.